The sequence spans 479 residues: MSILVKNNIHWVGQRDWEVRDFHGTEYKTLRGSSYNSYLIREEKNVLIDTVDHKFSREFVQNLRSEIDLADIDYIIINHAEEDHAGALTELMAQIPDTPIYCTANAIDSINGHHHHPEWNFKVVKTGDTLDIGNGKQLIFVETPMLHWPDSMMTYMTGDAVLFSNDAFGQHYCDERLFNDEVDQTELFEQCQRYYANILTPFSRLVTPKITEILGFNLPVDMIATSHGVVWRDNPTQIVELYLKWAADYQEDRITIFYDTMSNNTRMMADAIAQGINEVDPNVAVKIFNVARSDKNEILTNVFRSKGVLVGTSTMNNVMMPKIAGLVEEMTGLRFRNKRASAFGSHGWSGGAVDRLSTRLQDAGFEMSLSLKAKWRPDLDALELCRQHGRDIARQWALAPLPETTQKTAPAEEITTCVAADLGPKMQCSVCQWIYDPAQGEPLQDVAPGTPWSDVPDNFLCPECSLGKDVFDVLATEAK.

A zinc metallo-hydrolase region spans residues 30 to 210 (LRGSSYNSYL…PFSRLVTPKI (181 aa)). Residues H79, E81, D83, H147, D166, and H227 each coordinate Fe cation. The Flavodoxin-like domain maps to 254–393 (ITIFYDTMSN…LCRQHGRDIA (140 aa)). FMN-binding positions include 260 to 264 (TMSNN) and 342 to 369 (AFGSHGWSGGAVDRLSTRLQDAGFEMSL). The Rubredoxin-like domain occupies 423–474 (GPKMQCSVCQWIYDPAQGEPLQDVAPGTPWSDVPDNFLCPECSLGKDVFDVL). Residues C428, C431, C461, and C464 each coordinate Fe cation.

It in the N-terminal section; belongs to the zinc metallo-hydrolase group 3 family. In terms of assembly, homotetramer. The cofactor is Fe cation. FMN serves as cofactor.

It is found in the cytoplasm. The protein operates within nitrogen metabolism; nitric oxide reduction. Its function is as follows. Anaerobic nitric oxide reductase; uses NADH to detoxify nitric oxide (NO), protecting several 4Fe-4S NO-sensitive enzymes. Has at least 2 reductase partners, only one of which (NorW, flavorubredoxin reductase) has been identified. NO probably binds to the di-iron center; electrons enter from the NorW at rubredoxin and are transferred sequentially to the FMN center and the di-iron center. Also able to function as an aerobic oxygen reductase. The sequence is that of Anaerobic nitric oxide reductase flavorubredoxin from Salmonella choleraesuis (strain SC-B67).